Consider the following 396-residue polypeptide: Phosphoglycerate kinase (396 aa).

Substrate is bound by residues 21-23, R36, 59-62, R113, and R146; these read DLN and HLGR. Residues K197, E319, and 345–348 each bind ATP; that span reads GGDT.

The protein belongs to the phosphoglycerate kinase family. In terms of assembly, monomer.

It localises to the cytoplasm. The catalysed reaction is (2R)-3-phosphoglycerate + ATP = (2R)-3-phospho-glyceroyl phosphate + ADP. Its pathway is carbohydrate degradation; glycolysis; pyruvate from D-glyceraldehyde 3-phosphate: step 2/5. This Legionella pneumophila (strain Lens) protein is Phosphoglycerate kinase.